We begin with the raw amino-acid sequence, 209 residues long: CASP-like protein 1A1 (209 aa).

The tract at residues 1-26 (MEEAKHNEAEEAQGIEAREAKQIEAG) is disordered. Topologically, residues 1–49 (MEEAKHNEAEEAQGIEAREAKQIEAGETSRSSRKLITFEPKLVINKGIS) are cytoplasmic. Residues 50–70 (VLGFVLRLFAVFGTIGSALAM) form a helical membrane-spanning segment. At 71 to 95 (GTTHESVVSLSQLVLLKVKYSDLPT) the chain is on the extracellular side. The chain crosses the membrane as a helical span at residues 96-116 (LMFFVVANAISGGYLVLSLPV). The Cytoplasmic portion of the chain corresponds to 117-130 (SIFHIFSTQAKTSR). The helical transmembrane segment at 131–151 (IILLVVDTVMLALVSSGASAA) threads the bilayer. Residues 152–183 (TATVYLAHEGNTTANWPPICQQFDGFCERISG) are Extracellular-facing. N162 is a glycosylation site (N-linked (GlcNAc...) asparagine). Residues 184 to 204 (SLIGSFCAVILLMLIVINSAI) form a helical membrane-spanning segment. The Cytoplasmic segment spans residues 205 to 209 (SLSRH).

The protein belongs to the Casparian strip membrane proteins (CASP) family. Homodimer and heterodimers. As to expression, expressed in the root endodermis.

Its subcellular location is the cell membrane. The protein is CASP-like protein 1A1 of Arabidopsis thaliana (Mouse-ear cress).